Reading from the N-terminus, the 438-residue chain is Trigger factor (438 aa).

A PPIase FKBP-type domain is found at 162-247 (GDIVTIDFEG…VKEIKVKELP (86 aa)).

The protein belongs to the FKBP-type PPIase family. Tig subfamily.

The protein localises to the cytoplasm. The enzyme catalyses [protein]-peptidylproline (omega=180) = [protein]-peptidylproline (omega=0). Functionally, involved in protein export. Acts as a chaperone by maintaining the newly synthesized protein in an open conformation. Functions as a peptidyl-prolyl cis-trans isomerase. This Caldicellulosiruptor saccharolyticus (strain ATCC 43494 / DSM 8903 / Tp8T 6331) protein is Trigger factor.